A 364-amino-acid chain; its full sequence is Phosphoserine aminotransferase (364 aa).

Position 41 (Arg-41) interacts with L-glutamate. Pyridoxal 5'-phosphate contacts are provided by residues 75–76, Trp-100, Thr-155, and Gln-198; that span reads AS. An N6-(pyridoxal phosphate)lysine modification is found at Lys-199. Position 239-240 (239-240) interacts with pyridoxal 5'-phosphate; sequence NT.

This sequence belongs to the class-V pyridoxal-phosphate-dependent aminotransferase family. SerC subfamily. In terms of assembly, homodimer. It depends on pyridoxal 5'-phosphate as a cofactor.

It localises to the cytoplasm. The enzyme catalyses O-phospho-L-serine + 2-oxoglutarate = 3-phosphooxypyruvate + L-glutamate. It carries out the reaction 4-(phosphooxy)-L-threonine + 2-oxoglutarate = (R)-3-hydroxy-2-oxo-4-phosphooxybutanoate + L-glutamate. It functions in the pathway amino-acid biosynthesis; L-serine biosynthesis; L-serine from 3-phospho-D-glycerate: step 2/3. In terms of biological role, catalyzes the reversible conversion of 3-phosphohydroxypyruvate to phosphoserine and of 3-hydroxy-2-oxo-4-phosphonooxybutanoate to phosphohydroxythreonine. The sequence is that of Phosphoserine aminotransferase from Streptococcus thermophilus (strain ATCC BAA-250 / LMG 18311).